A 200-amino-acid polypeptide reads, in one-letter code: Small ribosomal subunit protein uS4 (200 aa).

The interval 22–42 (TGKELEKRPYAPGPHGPNQRK) is disordered. One can recognise an S4 RNA-binding domain in the interval 92–152 (ARLDNLVYRM…EKSNSLVVVK (61 aa)).

The protein belongs to the universal ribosomal protein uS4 family. Part of the 30S ribosomal subunit. Contacts protein S5. The interaction surface between S4 and S5 is involved in control of translational fidelity.

Its function is as follows. One of the primary rRNA binding proteins, it binds directly to 16S rRNA where it nucleates assembly of the body of the 30S subunit. With S5 and S12 plays an important role in translational accuracy. This chain is Small ribosomal subunit protein uS4, found in Bacillus mycoides (strain KBAB4) (Bacillus weihenstephanensis).